Here is a 358-residue protein sequence, read N- to C-terminus: MAIVLDGKCLCYHGPLLYEAKVLRVYDEKNQTITSKDYKDVSIDDEKVEFDRPPEHMRQGQCYFVHYQGWKSSWDEWVGLDRIRPYNDENLELKKSLVEKARELKNNGGKKKSGSRPVGRPSKVEKGKKAASRTSNSGSGTNTSASSTSASNPASSSSSGTTAAASSSDKSDRKKATPVLNKRSHPKIHIKVPISLRSVLVDDWENVTKDRKLVQLPSERPIEHILSQFYADTSNSTSSVVEQAQLSEFLQGIKLYFNLSLGKLLLYRLERIQYAELLKAHSEKQYTEIYGIIHLLRLVTLLPEMMESSNVDDQTAKILVKQCDILLEWIAINIARKNFPVDPYINTSSQYEGVALSM.

One can recognise a Tudor-knot domain in the interval 8–84 (KCLCYHGPLL…DEWVGLDRIR (77 aa)). The tract at residues 103-184 (ELKNNGGKKK…KATPVLNKRS (82 aa)) is disordered. Residues 132-168 (SRTSNSGSGTNTSASSTSASNPASSSSSGTTAAASSS) are compositionally biased toward low complexity. The MRG domain maps to 184 to 356 (SHPKIHIKVP…TSSQYEGVAL (173 aa)).

Belongs to the MRG family. Component of the NuA4 histone acetyltransferase complex.

It is found in the nucleus. Its function is as follows. Involved in deacetylation of histones, chromatin assembly and chromosome segregation. May act as a transcriptional oscillator, directing histone deacetylases to specific chromosomal domains. Component of the NuA4 histone acetyltransferase complex which is involved in transcriptional activation of selected genes principally by acetylation of nucleosomal histone H4 and H2A. The NuA4 complex is also involved in DNA repair. This is Chromatin modification-related protein EAF3 (EAF3) from Kluyveromyces lactis (strain ATCC 8585 / CBS 2359 / DSM 70799 / NBRC 1267 / NRRL Y-1140 / WM37) (Yeast).